The sequence spans 444 residues: Trimethylamine monooxygenase (444 aa).

Positions 12, 37, 39, 45, and 46 each coordinate FAD. NADP(+)-binding residues include W70 and N72. FAD is bound by residues N72 and V125. Positions 170, 202, 203, 205, 226, 227, and 288 each coordinate NADP(+). Q315 and T318 together coordinate FAD. Residue R409 coordinates NADP(+).

The protein belongs to the FMO family. As to quaternary structure, homodimer. FAD is required as a cofactor.

The catalysed reaction is trimethylamine + NADPH + O2 = trimethylamine N-oxide + NADP(+) + H2O. Functionally, catalyzes the oxidation of trimethylamine (TMA) to produce trimethylamine N-oxide (TMAO). In vitro, has a broad substrate specificity, oxidizing many nitrogen- and sulfur-containing compounds, including dimethylamine (DMA), dimethylsulfide (DMS), dimethylsulfoxide (DMSO) and methimazole. TMA shows the highest affinity. In Pelagibacter sp. (strain HTCC7211), this protein is Trimethylamine monooxygenase.